Reading from the N-terminus, the 364-residue chain is uncharacterized protein (364 aa).

Positions 1-17 (MEPGELMEVDTSQELDE) are enriched in acidic residues. Positions 1–61 (MEPGELMEVD…EEDQSSTETM (61 aa)) are disordered. Over residues 19 to 31 (TSAKETDQPKDAQ) the composition is skewed to basic and acidic residues.

This is an uncharacterized protein from Caenorhabditis elegans.